Consider the following 425-residue polypeptide: 5-methylthioadenosine/S-adenosylhomocysteine deaminase (425 aa).

Zn(2+) is bound by residues His63 and His65. Residues Glu92 and His184 each contribute to the substrate site. Residue His211 participates in Zn(2+) binding. Substrate contacts are provided by Glu214 and Asp299. Asp299 lines the Zn(2+) pocket.

It belongs to the metallo-dependent hydrolases superfamily. MTA/SAH deaminase family. The cofactor is Zn(2+).

The enzyme catalyses S-adenosyl-L-homocysteine + H2O + H(+) = S-inosyl-L-homocysteine + NH4(+). It catalyses the reaction S-methyl-5'-thioadenosine + H2O + H(+) = S-methyl-5'-thioinosine + NH4(+). In terms of biological role, catalyzes the deamination of 5-methylthioadenosine and S-adenosyl-L-homocysteine into 5-methylthioinosine and S-inosyl-L-homocysteine, respectively. Is also able to deaminate adenosine. The protein is 5-methylthioadenosine/S-adenosylhomocysteine deaminase of Pyrococcus abyssi (strain GE5 / Orsay).